The primary structure comprises 279 residues: Pantothenate synthetase (279 aa).

31 to 38 serves as a coordination point for ATP; the sequence is MGNLHGGH. H38 functions as the Proton donor in the catalytic mechanism. Q62 provides a ligand contact to (R)-pantoate. Q62 provides a ligand contact to beta-alanine. 150-153 provides a ligand contact to ATP; the sequence is GRKD. Residue Q156 participates in (R)-pantoate binding. Residues V179 and 187-190 each bind ATP; that span reads KSSR.

Belongs to the pantothenate synthetase family. As to quaternary structure, homodimer.

Its subcellular location is the cytoplasm. The catalysed reaction is (R)-pantoate + beta-alanine + ATP = (R)-pantothenate + AMP + diphosphate + H(+). The protein operates within cofactor biosynthesis; (R)-pantothenate biosynthesis; (R)-pantothenate from (R)-pantoate and beta-alanine: step 1/1. In terms of biological role, catalyzes the condensation of pantoate with beta-alanine in an ATP-dependent reaction via a pantoyl-adenylate intermediate. The chain is Pantothenate synthetase from Stenotrophomonas maltophilia (strain K279a).